A 313-amino-acid polypeptide reads, in one-letter code: Malate dehydrogenase (313 aa).

NAD(+) is bound by residues 8 to 13 (GAGNVG) and aspartate 33. Substrate is bound by residues arginine 83 and arginine 89. NAD(+) is bound by residues asparagine 96 and 119-121 (ISN). The substrate site is built by asparagine 121 and arginine 152. The active-site Proton acceptor is the histidine 176.

This sequence belongs to the LDH/MDH superfamily. MDH type 3 family.

It carries out the reaction (S)-malate + NAD(+) = oxaloacetate + NADH + H(+). Catalyzes the reversible oxidation of malate to oxaloacetate. This is Malate dehydrogenase from Bacteroides thetaiotaomicron (strain ATCC 29148 / DSM 2079 / JCM 5827 / CCUG 10774 / NCTC 10582 / VPI-5482 / E50).